Reading from the N-terminus, the 471-residue chain is MTWLTAFKDKNIVVLGAGMTGLSCLRFLHAQDLSFAVNDSRPMPFANRDEQTQYENDYPKAKFVFGQWQQSLISSADIIITSPGIDLVSEGITALIPENCLVIGDVELFCLVNNSRISPMKMLAVTGSNGKSTVVSLLASLAKAIGVNAALAGNIGEPILNLLHRENVYNSQLANQPDIVIVELSSFQLETLSSMHAIAASVLNLSDDHLDRHKTLANYQAIKQSIYPQAKIAVVSREDQASNTLVAAQEIISFGLNKPEQDCFGLQAIDNKMVMMFGEQALISIDELPLAGMHNALNYMAALALGYSAGWSLSAMTENLAGFMGLAHRCQRVASEDYIQWINDSKATNVGATLAAITGLVPTLTGQNKLILIAGGDGKGADFSALTTILNCDVNQLITLGKDGAEIASLVSDAIQVDTLREAVEQAKQIAKPGDMVLLSPACASIDMFKNYQVRGEQFIAAVQAKEDSCR.

ATP is bound at residue 127-133; sequence GSNGKST.

This sequence belongs to the MurCDEF family.

It localises to the cytoplasm. It catalyses the reaction UDP-N-acetyl-alpha-D-muramoyl-L-alanine + D-glutamate + ATP = UDP-N-acetyl-alpha-D-muramoyl-L-alanyl-D-glutamate + ADP + phosphate + H(+). It functions in the pathway cell wall biogenesis; peptidoglycan biosynthesis. Its function is as follows. Cell wall formation. Catalyzes the addition of glutamate to the nucleotide precursor UDP-N-acetylmuramoyl-L-alanine (UMA). This Colwellia psychrerythraea (strain 34H / ATCC BAA-681) (Vibrio psychroerythus) protein is UDP-N-acetylmuramoylalanine--D-glutamate ligase.